The chain runs to 414 residues: Cyclic di-GMP phosphodiesterase PA4108 (414 aa).

One can recognise an HD-GYP domain in the interval 133–330 (ISASVLRHPN…YPVGALVRLE (198 aa)). Residues H160, H192, D193, H221, H246, and H247 each coordinate a divalent metal cation.

Monomer.

The enzyme catalyses 3',3'-c-di-GMP + 2 H2O = 2 GMP + 2 H(+). Its activity is regulated as follows. Activated by Mg(2+) and Mn(2+). Phosphodiesterase (PDE) that catalyzes the hydrolysis of cyclic diguanylate (c-di-GMP) to GMP. Hydrolyzes c-di-GMP to GMP in a two-step reaction, via the linear intermediate 5'-phosphoguanylyl(3'-&gt;5')guanosine (pGpG). In vitro, can use pGpG as an alternative substrate and hydrolyze it into GMP. Acts in regulation of motility, synthesis of virulence determinants and biofilm architecture. The sequence is that of Cyclic di-GMP phosphodiesterase PA4108 from Pseudomonas aeruginosa (strain ATCC 15692 / DSM 22644 / CIP 104116 / JCM 14847 / LMG 12228 / 1C / PRS 101 / PAO1).